A 701-amino-acid chain; its full sequence is DNA ligase (701 aa).

Residues 43–47, 92–93, and Glu126 each bind NAD(+); these read DAAYD and SL. Lys128 functions as the N6-AMP-lysine intermediate in the catalytic mechanism. Positions 149, 186, 302, and 326 each coordinate NAD(+). Positions 420, 423, 444, and 450 each coordinate Zn(2+). The region spanning 623-701 is the BRCT domain; it reads ANDSPVAGKT…EDEWFDLIGA (79 aa).

This sequence belongs to the NAD-dependent DNA ligase family. LigA subfamily. The cofactor is Mg(2+). Mn(2+) is required as a cofactor.

The enzyme catalyses NAD(+) + (deoxyribonucleotide)n-3'-hydroxyl + 5'-phospho-(deoxyribonucleotide)m = (deoxyribonucleotide)n+m + AMP + beta-nicotinamide D-nucleotide.. Its function is as follows. DNA ligase that catalyzes the formation of phosphodiester linkages between 5'-phosphoryl and 3'-hydroxyl groups in double-stranded DNA using NAD as a coenzyme and as the energy source for the reaction. It is essential for DNA replication and repair of damaged DNA. The chain is DNA ligase from Maricaulis maris (strain MCS10) (Caulobacter maris).